The primary structure comprises 403 residues: Aspartate aminotransferase, cytoplasmic isozyme 2 (403 aa).

N-acetylmethionine is present on methionine 1. 3 residues coordinate L-aspartate: glycine 37, tryptophan 132, and asparagine 185. Lysine 249 bears the N6-(pyridoxal phosphate)lysine mark. An L-aspartate-binding site is contributed by arginine 377.

The protein belongs to the class-I pyridoxal-phosphate-dependent aminotransferase family. In terms of assembly, homodimer. Requires pyridoxal 5'-phosphate as cofactor.

The protein resides in the cytoplasm. It carries out the reaction L-aspartate + 2-oxoglutarate = oxaloacetate + L-glutamate. Its function is as follows. Important for the metabolism of amino acids and Krebs-cycle related organic acids. In plants, it is involved in nitrogen metabolism and in aspects of carbon and energy metabolism. The chain is Aspartate aminotransferase, cytoplasmic isozyme 2 (ASP4) from Arabidopsis thaliana (Mouse-ear cress).